The primary structure comprises 330 residues: Phosphate acyltransferase (330 aa).

Belongs to the PlsX family. As to quaternary structure, homodimer. Probably interacts with PlsY.

It localises to the cytoplasm. The enzyme catalyses a fatty acyl-[ACP] + phosphate = an acyl phosphate + holo-[ACP]. It participates in lipid metabolism; phospholipid metabolism. Functionally, catalyzes the reversible formation of acyl-phosphate (acyl-PO(4)) from acyl-[acyl-carrier-protein] (acyl-ACP). This enzyme utilizes acyl-ACP as fatty acyl donor, but not acyl-CoA. This is Phosphate acyltransferase from Streptococcus agalactiae serotype Ia (strain ATCC 27591 / A909 / CDC SS700).